The chain runs to 503 residues: Cytochrome P450 6l1 (503 aa).

Residue C438 coordinates heme.

Belongs to the cytochrome P450 family. The cofactor is heme. Detected only in testes and accessory glands of male adults.

The protein resides in the endoplasmic reticulum membrane. Its subcellular location is the microsome membrane. This Blattella germanica (German cockroach) protein is Cytochrome P450 6l1 (CYP6L1).